The chain runs to 457 residues: Multidrug resistance protein MdtK (457 aa).

At 1–10 (MQKYISEARL) the chain is on the cytoplasmic side. Residues 11–31 (LLALAIPVILAQIAQTAMGFV) traverse the membrane as a helical segment. At 32-52 (DTVMAGGYSATDMAAVAIGTS) the chain is on the periplasmic side. Residues 53 to 73 (IWLPAILFGHGLLLALTPVIA) traverse the membrane as a helical segment. At 74 to 92 (QLNGSGRRERIAHQVRQGF) the chain is on the cytoplasmic side. Residues 93 to 113 (WLAGFVSVLIMLVLWNAGYII) traverse the membrane as a helical segment. Residues 114 to 126 (RYMENIDPALADK) lie on the Periplasmic side of the membrane. The chain crosses the membrane as a helical span at residues 127-147 (AVGYLRALLWGAPGYLFFQVA). Residues 148-159 (RNQCEGLAKAKP) are Cytoplasmic-facing. A helical membrane pass occupies residues 160 to 180 (GMVMGFIGLLVNIPVNYIFIY). Residues 181-188 (GHFGMPEL) are Periplasmic-facing. The chain crosses the membrane as a helical span at residues 189-209 (GGVGCGVATAAVYWVMFLAMV). Residues 210-242 (SYIKRARSMRDIRNEKGTAKPEPAVMKRLIQLG) lie on the Cytoplasmic side of the membrane. The helical transmembrane segment at 243–263 (LPIALALFLEVTLFAVVALLV) threads the bilayer. The Periplasmic segment spans residues 264–275 (SPLGIVDVAGHQ). The helical transmembrane segment at 276–296 (IALNFSSLMFVLPMSLAAAVT) threads the bilayer. Over 297-313 (IRVGYRLGQGSTLDAQT) the chain is Cytoplasmic. The helical transmembrane segment at 314–334 (AARTGLMVGVCMATLTAIFTV) threads the bilayer. Over 335–349 (SLREQIALLYNDNPE) the chain is Periplasmic. The chain crosses the membrane as a helical span at residues 350 to 370 (VVTLAAHLMLLAAVYQISDSI). Over 371-386 (QVIGSGILRGYKDTRS) the chain is Cytoplasmic. A helical membrane pass occupies residues 387–407 (IFYITFTAYWVLGLPSGYILA). Residues 408-417 (LTDLVVEPMG) lie on the Periplasmic side of the membrane. The helical transmembrane segment at 418-438 (PAGFWIGFIIGLTSAAIMMML) threads the bilayer. Residues 439–457 (RMRFLQRMPSAIILQRASR) are Cytoplasmic-facing.

Belongs to the multi antimicrobial extrusion (MATE) (TC 2.A.66.1) family. MdtK subfamily.

The protein localises to the cell inner membrane. In terms of biological role, multidrug efflux pump that functions probably as a Na(+)/drug antiporter. The chain is Multidrug resistance protein MdtK from Shigella flexneri serotype 5b (strain 8401).